We begin with the raw amino-acid sequence, 338 residues long: MEMO1 family protein MHO1 (338 aa).

Belongs to the MEMO1 family.

The protein resides in the cytoplasm. The protein localises to the nucleus. Plays a role in haploid invasive growth under conditions of nutrient insufficiency, suggesting that the function of the MEMO1 family in cell motility/invasion is conserved across species. This is MEMO1 family protein MHO1 from Saccharomyces cerevisiae (strain ATCC 204508 / S288c) (Baker's yeast).